The primary structure comprises 874 residues: Alanine--tRNA ligase (874 aa).

Residues H562, H566, C664, and H668 each contribute to the Zn(2+) site.

The protein belongs to the class-II aminoacyl-tRNA synthetase family. Zn(2+) is required as a cofactor.

It localises to the cytoplasm. It catalyses the reaction tRNA(Ala) + L-alanine + ATP = L-alanyl-tRNA(Ala) + AMP + diphosphate. Its function is as follows. Catalyzes the attachment of alanine to tRNA(Ala) in a two-step reaction: alanine is first activated by ATP to form Ala-AMP and then transferred to the acceptor end of tRNA(Ala). Also edits incorrectly charged Ser-tRNA(Ala) and Gly-tRNA(Ala) via its editing domain. In Shewanella sp. (strain MR-7), this protein is Alanine--tRNA ligase.